The primary structure comprises 1284 residues: DNA-directed RNA polymerase subunit beta (1284 aa).

The protein belongs to the RNA polymerase beta chain family. The RNAP catalytic core consists of 2 alpha, 1 beta, 1 beta' and 1 omega subunit. When a sigma factor is associated with the core the holoenzyme is formed, which can initiate transcription.

The enzyme catalyses RNA(n) + a ribonucleoside 5'-triphosphate = RNA(n+1) + diphosphate. Its function is as follows. DNA-dependent RNA polymerase catalyzes the transcription of DNA into RNA using the four ribonucleoside triphosphates as substrates. The polypeptide is DNA-directed RNA polymerase subunit beta (Mesoplasma florum (strain ATCC 33453 / NBRC 100688 / NCTC 11704 / L1) (Acholeplasma florum)).